The chain runs to 1876 residues: Mediator of RNA polymerase II transcription subunit 12 (1876 aa).

The segment covering 1 to 10 has biased composition (low complexity); the sequence is MLRSGAASAS. Disordered regions lie at residues 1–75, 291–314, 715–737, 1373–1405, and 1801–1876; these read MLRS…DMSQ, TATASPAPVSPSTHLPRTPSAAPS, PSASSATEQHQNPDGSVQTPSSV, STDADKTPRRMDNSHKGMTNFGPDDGADAPAQA, and LPCR…SKRD. A compositionally biased stretch (basic and acidic residues) spans 1373–1387; it reads STDADKTPRRMDNSH. The segment covering 1394–1405 has biased composition (low complexity); sequence GPDDGADAPAQA. A compositionally biased stretch (basic residues) spans 1867 to 1876; it reads SRKRRLSKRD.

Belongs to the Mediator complex subunit 12 family. As to quaternary structure, component of the SRB8-11 complex, which itself associates with the Mediator complex.

It is found in the nucleus. Its function is as follows. Component of the SRB8-11 complex. The SRB8-11 complex is a regulatory module of the Mediator complex which is itself involved in regulation of basal and activated RNA polymerase II-dependent transcription. The SRB8-11 complex may be involved in the transcriptional repression of a subset of genes regulated by Mediator. It may inhibit the association of the Mediator complex with RNA polymerase II to form the holoenzyme complex. The polypeptide is Mediator of RNA polymerase II transcription subunit 12 (SRB8) (Mycosarcoma maydis (Corn smut fungus)).